A 567-amino-acid chain; its full sequence is Proline--tRNA ligase (567 aa).

The protein belongs to the class-II aminoacyl-tRNA synthetase family. ProS type 1 subfamily. As to quaternary structure, homodimer.

It localises to the cytoplasm. It carries out the reaction tRNA(Pro) + L-proline + ATP = L-prolyl-tRNA(Pro) + AMP + diphosphate. Functionally, catalyzes the attachment of proline to tRNA(Pro) in a two-step reaction: proline is first activated by ATP to form Pro-AMP and then transferred to the acceptor end of tRNA(Pro). As ProRS can inadvertently accommodate and process non-cognate amino acids such as alanine and cysteine, to avoid such errors it has two additional distinct editing activities against alanine. One activity is designated as 'pretransfer' editing and involves the tRNA(Pro)-independent hydrolysis of activated Ala-AMP. The other activity is designated 'posttransfer' editing and involves deacylation of mischarged Ala-tRNA(Pro). The misacylated Cys-tRNA(Pro) is not edited by ProRS. The polypeptide is Proline--tRNA ligase (Geobacillus kaustophilus (strain HTA426)).